The following is a 247-amino-acid chain: tRNA pseudouridine synthase A (247 aa).

The active-site Nucleophile is aspartate 52. Residue tyrosine 113 coordinates substrate.

This sequence belongs to the tRNA pseudouridine synthase TruA family. In terms of assembly, homodimer.

The catalysed reaction is uridine(38/39/40) in tRNA = pseudouridine(38/39/40) in tRNA. Functionally, formation of pseudouridine at positions 38, 39 and 40 in the anticodon stem and loop of transfer RNAs. This is tRNA pseudouridine synthase A from Rhizobium meliloti (strain 1021) (Ensifer meliloti).